Here is a 482-residue protein sequence, read N- to C-terminus: UDP-N-acetylmuramoyl-L-alanyl-D-glutamate--2,6-diaminopimelate ligase (482 aa).

Residue S29 participates in UDP-N-acetyl-alpha-D-muramoyl-L-alanyl-D-glutamate binding. ATP is bound at residue 109–115 (GTNGKTS). Residues 151 to 152 (TT), S178, and R186 each bind UDP-N-acetyl-alpha-D-muramoyl-L-alanyl-D-glutamate. K218 is modified (N6-carboxylysine). Meso-2,6-diaminopimelate contacts are provided by residues R375, 399 to 402 (DNPR), G451, and E455. Residues 399-402 (DNPR) carry the Meso-diaminopimelate recognition motif motif.

It belongs to the MurCDEF family. MurE subfamily. Mg(2+) is required as a cofactor. In terms of processing, carboxylation is probably crucial for Mg(2+) binding and, consequently, for the gamma-phosphate positioning of ATP.

The protein localises to the cytoplasm. The catalysed reaction is UDP-N-acetyl-alpha-D-muramoyl-L-alanyl-D-glutamate + meso-2,6-diaminopimelate + ATP = UDP-N-acetyl-alpha-D-muramoyl-L-alanyl-gamma-D-glutamyl-meso-2,6-diaminopimelate + ADP + phosphate + H(+). It functions in the pathway cell wall biogenesis; peptidoglycan biosynthesis. Functionally, catalyzes the addition of meso-diaminopimelic acid to the nucleotide precursor UDP-N-acetylmuramoyl-L-alanyl-D-glutamate (UMAG) in the biosynthesis of bacterial cell-wall peptidoglycan. The polypeptide is UDP-N-acetylmuramoyl-L-alanyl-D-glutamate--2,6-diaminopimelate ligase (Caldanaerobacter subterraneus subsp. tengcongensis (strain DSM 15242 / JCM 11007 / NBRC 100824 / MB4) (Thermoanaerobacter tengcongensis)).